Reading from the N-terminus, the 209-residue chain is uncharacterized protein (209 aa).

Positions 39–75 (VSFENFMERYDTMEKNIQDLQNKYEEMANNLVAVMAD) form a coiled coil. The tract at residues 103–131 (TMKDATSLPPPNPNNEQSVFTNGSPTSGK) is disordered. Positions 116 to 129 (NNEQSVFTNGSPTS) are enriched in polar residues.

The protein belongs to the asfivirus K205R family.

It is found in the host cytoplasm. Induces host endoplasmic reticulum stress and consequently activates autophagy and NF-kappa-B signaling pathway. In turn, may induce autophagy-mediated STING1 degradation and innate immune evasion. This is an uncharacterized protein from Ornithodoros (relapsing fever ticks).